Here is a 554-residue protein sequence, read N- to C-terminus: Eukaryotic translation initiation factor 3 subunit D-2 (554 aa).

The segment at Arg-116–Gly-149 is disordered. The span at Ala-120–Tyr-140 shows a compositional bias: gly residues. The RNA gate stretch occupies residues Gln-291 to Pro-305. Residues Phe-532 to Asn-554 form a disordered region.

This sequence belongs to the eIF-3 subunit D family. Component of the eukaryotic translation initiation factor 3 (eIF-3) complex. The eIF-3 complex interacts with pix.

It localises to the cytoplasm. In terms of biological role, mRNA cap-binding component of the eukaryotic translation initiation factor 3 (eIF-3) complex, which is involved in protein synthesis of a specialized repertoire of mRNAs and, together with other initiation factors, stimulates binding of mRNA and methionyl-tRNAi to the 40S ribosome. The eIF-3 complex specifically targets and initiates translation of a subset of mRNAs involved in cell proliferation. In the eIF-3 complex, eif3d specifically recognizes and binds the 7-methylguanosine cap of a subset of mRNAs. The chain is Eukaryotic translation initiation factor 3 subunit D-2 from Drosophila virilis (Fruit fly).